We begin with the raw amino-acid sequence, 148 residues long: Snaclec crotocetin (148 aa).

Residues 1-23 (MGRLVFVSFGLLVVFLSLTGTGA) form the signal peptide. 3 disulfides stabilise this stretch: Cys-27/Cys-38, Cys-55/Cys-144, and Cys-121/Cys-136. The C-type lectin domain occupies 34–145 (YEGHCYKVFK…CSKTHKVVCK (112 aa)).

This sequence belongs to the snaclec family. As to quaternary structure, heterodimer; disulfide-linked. In terms of tissue distribution, expressed by the venom gland.

It is found in the secreted. Its function is as follows. Interferes with one step of hemostasis (modulation of platelet aggregation, or coagulation cascade, for example). The chain is Snaclec crotocetin from Crotalus durissus terrificus (South American rattlesnake).